The chain runs to 181 residues: Large ribosomal subunit protein eL18 (181 aa).

This sequence belongs to the eukaryotic ribosomal protein eL18 family.

It localises to the cytoplasm. In Dictyostelium discoideum (Social amoeba), this protein is Large ribosomal subunit protein eL18 (rpl18).